The chain runs to 205 residues: Ribosomal RNA small subunit methyltransferase G (205 aa).

Residues G76, L81, 127–128, and R140 each bind S-adenosyl-L-methionine; that span reads IE.

This sequence belongs to the methyltransferase superfamily. RNA methyltransferase RsmG family.

It is found in the cytoplasm. The catalysed reaction is guanosine(527) in 16S rRNA + S-adenosyl-L-methionine = N(7)-methylguanosine(527) in 16S rRNA + S-adenosyl-L-homocysteine. Functionally, specifically methylates the N7 position of guanine in position 527 of 16S rRNA. This is Ribosomal RNA small subunit methyltransferase G from Francisella tularensis subsp. tularensis (strain FSC 198).